The following is a 396-amino-acid chain: Deoxyguanosinetriphosphate triphosphohydrolase-like protein (396 aa).

One can recognise an HD domain in the interval 69–211; the sequence is RLSHSLEVSQ…AALADDIAYN (143 aa).

The protein belongs to the dGTPase family. Type 2 subfamily.

The polypeptide is Deoxyguanosinetriphosphate triphosphohydrolase-like protein (Parvibaculum lavamentivorans (strain DS-1 / DSM 13023 / NCIMB 13966)).